The chain runs to 308 residues: HTH-type transcriptional activator AllS (308 aa).

The 58-residue stretch at 2 to 59 (FDPETLRTFISVAETGSFSKAAERLCKTTATISYRIKLLEENTGVGLFFRTTRSVSLT) folds into the HTH lysR-type domain. Residues 19-38 (FSKAAERLCKTTATISYRIK) constitute a DNA-binding region (H-T-H motif).

The protein belongs to the LysR transcriptional regulatory family.

Positive regulator essential for the expression of allD operon. Binds to the allD promoter. This Salmonella paratyphi A (strain ATCC 9150 / SARB42) protein is HTH-type transcriptional activator AllS (allS).